Here is a 484-residue protein sequence, read N- to C-terminus: uncharacterized protein (484 aa).

The FAD-binding PCMH-type domain maps to 47-226; sequence TLPIPAAVVK…TEVTVKIFKF (180 aa).

It belongs to the FAD-binding oxidoreductase/transferase type 4 family.

This is an uncharacterized protein from Escherichia coli (strain K12).